The primary structure comprises 449 residues: Methionine aminopeptidase 2-2 (449 aa).

A disordered region spans residues 1-91 (MAAQAAPELA…PRIPLTTLFP (91 aa)). Residues 15–28 (NKNTGSAEASTVPA) show a composition bias toward polar residues. The span at 34–50 (DDAENEGDSDDDRDDEQ) shows a compositional bias: acidic residues. The span at 61-75 (KKKKKKRPKKKKKTA) shows a compositional bias: basic residues. His-199 provides a ligand contact to substrate. A divalent metal cation-binding residues include Asp-219, Asp-230, and His-299. Substrate is bound at residue His-307. Glu-335 and Glu-430 together coordinate a divalent metal cation.

This sequence belongs to the peptidase M24A family. Methionine aminopeptidase eukaryotic type 2 subfamily. Requires Co(2+) as cofactor. It depends on Zn(2+) as a cofactor. Mn(2+) serves as cofactor. Fe(2+) is required as a cofactor.

The protein resides in the cytoplasm. The catalysed reaction is Release of N-terminal amino acids, preferentially methionine, from peptides and arylamides.. Functionally, cotranslationally removes the N-terminal methionine from nascent proteins. The N-terminal methionine is often cleaved when the second residue in the primary sequence is small and uncharged (Met-Ala-, Cys, Gly, Pro, Ser, Thr, or Val). In Arthroderma gypseum (strain ATCC MYA-4604 / CBS 118893) (Microsporum gypseum), this protein is Methionine aminopeptidase 2-2.